A 107-amino-acid chain; its full sequence is Putative double-stranded DNA mimic protein YE2228 (107 aa).

It belongs to the putative dsDNA mimic protein family.

Functionally, may act as a double-stranded DNA (dsDNA) mimic. Probably regulates the activity of a dsDNA-binding protein. The sequence is that of Putative double-stranded DNA mimic protein YE2228 from Yersinia enterocolitica serotype O:8 / biotype 1B (strain NCTC 13174 / 8081).